A 282-amino-acid chain; its full sequence is Short-chain dehydrogenase/reductase prx7 (282 aa).

Residues Asn23, Asn70, Tyr150, Lys154, Val183, and Thr185 each contribute to the NADP(+) site. The Proton acceptor role is filled by Tyr150. Lys154 acts as the Lowers pKa of active site Tyr in catalysis.

The protein belongs to the short-chain dehydrogenases/reductases (SDR) family.

It participates in sesquiterpene biosynthesis. In terms of biological role, short-chain dehydrogenase/reductase; part of the gene cluster that mediates the biosynthesis of PR-toxin, a bicyclic sesquiterpene belonging to the eremophilane class and acting as a mycotoxin. The first step of the pathway is catalyzed by the aristolochene synthase which performs the cyclization of trans,trans-farnesyl diphosphate (FPP) to the bicyclic sesquiterpene aristolochene. Following the formation of aristolochene, the non-oxygenated aristolochene is converted to the trioxygenated intermediate eremofortin B, via 7-epi-neopetasone. This conversion appears to involve three enzymes, a hydroxysterol oxidase-like enzyme, the quinone-oxidase prx3 that forms the quinone-type-structure in the bicyclic nucleus of aristolochene with the C8-oxo group and the C-3 hydroxyl group, and the P450 monooxygenase prx9 that introduces the epoxide at the double bond between carbons 1 and 2. No monoxy or dioxy-intermediates have been reported to be released to the broth, so these three early oxidative reactions may be coupled together. Eremofortin B is further oxidized by another P450 monooxygenase, that introduces a second epoxide between carbons 7 and 11 prior to acetylation to eremofortin A by the acetyltransferase prx11. The second epoxidation may be performed by a second P450 monooxygenase. After the acetylation step, eremofortin A is converted to eremofortin C and then to PR-toxin. First the conversion of eremofortin A to eremofortin C proceeds by oxidation of the side chain of the molecule at C-12 and is catalyzed by the short-chain oxidoreductase prx1. The cytochrome P450 monooxygenase prx8 also plays a role in this step. The primary alcohol formed at C-12 is finally oxidized by the short-chain alcohol dehydrogenase prx4 that forms PR-toxin. This chain is Short-chain dehydrogenase/reductase prx7, found in Penicillium rubens (strain ATCC 28089 / DSM 1075 / NRRL 1951 / Wisconsin 54-1255) (Penicillium chrysogenum).